The primary structure comprises 117 residues: Large ribosomal subunit protein uL22 (117 aa).

This sequence belongs to the universal ribosomal protein uL22 family. As to quaternary structure, part of the 50S ribosomal subunit.

In terms of biological role, this protein binds specifically to 23S rRNA; its binding is stimulated by other ribosomal proteins, e.g. L4, L17, and L20. It is important during the early stages of 50S assembly. It makes multiple contacts with different domains of the 23S rRNA in the assembled 50S subunit and ribosome. Its function is as follows. The globular domain of the protein is located near the polypeptide exit tunnel on the outside of the subunit, while an extended beta-hairpin is found that lines the wall of the exit tunnel in the center of the 70S ribosome. The protein is Large ribosomal subunit protein uL22 of Latilactobacillus sakei subsp. sakei (strain 23K) (Lactobacillus sakei subsp. sakei).